A 191-amino-acid polypeptide reads, in one-letter code: Transcriptional regulator MET32 (191 aa).

Residues 70-96 form a disordered region; sequence KKENALPKPPKSSKSKPQDRRNSTGEK. The span at 85–96 shows a compositional bias: basic and acidic residues; sequence KPQDRRNSTGEK. Residues 98 to 120 form a C2H2-type 1 zinc finger; it reads FKCAKCSLEFSRSSDLRRHEKTH. Residues 126–150 form a C2H2-type 2; atypical zinc finger; it reads NICPQCGKGFARKDALKRHYDTLTC.

As to quaternary structure, interacts with MET4 and MET28.

It localises to the cytoplasm. The protein resides in the nucleus. In terms of biological role, auxiliary transcriptional regulator of sulfur amino acid metabolism. Involved in the transcriptional activation of MET28. The protein is Transcriptional regulator MET32 (MET32) of Saccharomyces cerevisiae (strain ATCC 204508 / S288c) (Baker's yeast).